Reading from the N-terminus, the 225-residue chain is 2-C-methyl-D-erythritol 4-phosphate cytidylyltransferase (225 aa).

The protein belongs to the IspD/TarI cytidylyltransferase family. IspD subfamily.

It carries out the reaction 2-C-methyl-D-erythritol 4-phosphate + CTP + H(+) = 4-CDP-2-C-methyl-D-erythritol + diphosphate. Its pathway is isoprenoid biosynthesis; isopentenyl diphosphate biosynthesis via DXP pathway; isopentenyl diphosphate from 1-deoxy-D-xylulose 5-phosphate: step 2/6. Catalyzes the formation of 4-diphosphocytidyl-2-C-methyl-D-erythritol from CTP and 2-C-methyl-D-erythritol 4-phosphate (MEP). This Prochlorococcus marinus (strain NATL2A) protein is 2-C-methyl-D-erythritol 4-phosphate cytidylyltransferase.